We begin with the raw amino-acid sequence, 860 residues long: Nuclear pore complex protein NUP93B (860 aa).

The protein belongs to the nucleoporin interacting component (NIC) family. Part of the nuclear pore complex (NPC). The NPC has an eight-fold symmetrical structure comprising a central transport channel and two rings, the cytoplasmic and nuclear rings, to which eight filaments are attached. The cytoplasmic filaments have loose ends, while the nuclear filaments are joined in a distal ring, forming a nuclear basket. NPCs are highly dynamic in configuration and composition, and can be devided in 3 subcomplexes, the NUP62 subcomplex, the NUP107-160 subcomplex and the NUP93 subcomplex, containing approximately 30 different nucleoporin proteins.

The protein resides in the nucleus envelope. Its subcellular location is the nucleus. It is found in the nuclear pore complex. The sequence is that of Nuclear pore complex protein NUP93B from Arabidopsis thaliana (Mouse-ear cress).